The chain runs to 152 residues: Ribosomal RNA large subunit methyltransferase H (152 aa).

S-adenosyl-L-methionine contacts are provided by residues leucine 71, glycine 101, and leucine 120–phenylalanine 125.

It belongs to the RNA methyltransferase RlmH family. In terms of assembly, homodimer.

It is found in the cytoplasm. It carries out the reaction pseudouridine(1915) in 23S rRNA + S-adenosyl-L-methionine = N(3)-methylpseudouridine(1915) in 23S rRNA + S-adenosyl-L-homocysteine + H(+). Functionally, specifically methylates the pseudouridine at position 1915 (m3Psi1915) in 23S rRNA. The protein is Ribosomal RNA large subunit methyltransferase H of Thermosipho melanesiensis (strain DSM 12029 / CIP 104789 / BI429).